We begin with the raw amino-acid sequence, 65 residues long: Large ribosomal subunit protein bL35 (65 aa).

Belongs to the bacterial ribosomal protein bL35 family.

This chain is Large ribosomal subunit protein bL35, found in Edwardsiella ictaluri (strain 93-146).